Consider the following 244-residue polypeptide: uncharacterized protein (244 aa).

The N-terminal stretch at 1 to 18 (MQFSVLCKFLLLVTAVMA) is a signal peptide. The Lumenal portion of the chain corresponds to 19 to 223 (QTEYTPGFTT…TTIPSSAVHY (205 aa)). 2 stretches are compositionally biased toward low complexity: residues 55–65 (ETSTHSVTSTN) and 75–128 (TSHN…TTHV). A disordered region spans residues 55-128 (ETSTHSVTST…TTVVPPTTHV (74 aa)). The chain crosses the membrane as a helical span at residues 224-244 (ASPSGLLALVVMLISAFAFLA).

The protein resides in the endoplasmic reticulum membrane. This is an uncharacterized protein from Schizosaccharomyces pombe (strain 972 / ATCC 24843) (Fission yeast).